Consider the following 199-residue polypeptide: Molybdenum cofactor guanylyltransferase (199 aa).

GTP-binding positions include Leu-12–Gly-14, Lys-25, Asn-53, Asp-71, and Asp-101. Asp-101 contacts Mg(2+).

The protein belongs to the MobA family. Monomer. The cofactor is Mg(2+).

The protein resides in the cytoplasm. It catalyses the reaction Mo-molybdopterin + GTP + H(+) = Mo-molybdopterin guanine dinucleotide + diphosphate. Functionally, transfers a GMP moiety from GTP to Mo-molybdopterin (Mo-MPT) cofactor (Moco or molybdenum cofactor) to form Mo-molybdopterin guanine dinucleotide (Mo-MGD) cofactor. This Polynucleobacter asymbioticus (strain DSM 18221 / CIP 109841 / QLW-P1DMWA-1) (Polynucleobacter necessarius subsp. asymbioticus) protein is Molybdenum cofactor guanylyltransferase.